The following is a 485-amino-acid chain: Cysteine--tRNA ligase (485 aa).

Cys28 lines the Zn(2+) pocket. A 'HIGH' region motif is present at residues 30-40 (MTVYDLCHVGH). Residues Cys209, His234, and Glu238 each contribute to the Zn(2+) site. The 'KMSKS' region motif lies at 266-270 (KMSKS). ATP is bound at residue Lys269.

Belongs to the class-I aminoacyl-tRNA synthetase family. As to quaternary structure, monomer. It depends on Zn(2+) as a cofactor.

It is found in the cytoplasm. It catalyses the reaction tRNA(Cys) + L-cysteine + ATP = L-cysteinyl-tRNA(Cys) + AMP + diphosphate. The protein is Cysteine--tRNA ligase of Nitrosococcus oceani (strain ATCC 19707 / BCRC 17464 / JCM 30415 / NCIMB 11848 / C-107).